The chain runs to 364 residues: GDP-fucose transporter 1 (364 aa).

A run of 8 helical transmembrane segments spans residues 34-56 (FVLR…ISMV), 76-98 (VTFY…ATCC), 111-130 (LKVA…MITF), 140-162 (VAFY…YLLL), 167-185 (SFYA…WLGV), 195-214 (SWTG…LNAI), 227-249 (IWRL…LLAL), and 264-286 (AHFW…VTGL). Residues 345-364 (MKKTQEEPHPRENEKSNMEV) are disordered.

This sequence belongs to the TPT transporter family. SLC35C subfamily.

It is found in the golgi apparatus membrane. The enzyme catalyses GMP(out) + GDP-beta-L-fucose(in) = GMP(in) + GDP-beta-L-fucose(out). Functionally, antiporter specific for GDP-l-fucose and depending on the concomitant reverse transport of GMP. Involved in GDP-fucose import from the cytoplasm into the Golgi lumen. In Bos taurus (Bovine), this protein is GDP-fucose transporter 1 (SLC35C1).